The following is a 221-amino-acid chain: Ethylene-inducing xylanase 4 (221 aa).

The signal sequence occupies residues 1–19 (MVSFSTLLTACTAITGALG). Residues 28–218 (NVTPNAQGTH…SAGRASVVVE (191 aa)) enclose the GH11 domain. N-linked (GlcNAc...) asparagine glycosylation is present at N96. E114 serves as the catalytic Nucleophile. E205 serves as the catalytic Proton donor.

The protein belongs to the glycosyl hydrolase 11 (cellulase G) family.

It carries out the reaction Endohydrolysis of (1-&gt;4)-beta-D-xylosidic linkages in xylans.. The protein operates within glycan degradation; xylan degradation. Endo-1,4-beta-xylanase involved in the hydrolysis of xylan, a major structural heterogeneous polysaccharide found in plant biomass representing the second most abundant polysaccharide in the biosphere, after cellulose. May act as an elicitor of plant defense responses in certain plants but does not exhibit any cell death when transiently expressed in N.benthamiana. The protein is Ethylene-inducing xylanase 4 of Verticillium dahliae (strain VdLs.17 / ATCC MYA-4575 / FGSC 10137) (Verticillium wilt).